The following is a 231-amino-acid chain: Phosphoglycolate phosphatase (231 aa).

Catalysis depends on Asp9, which acts as the Nucleophile. Mg(2+) is bound by residues Asp9 and Asp11. Lys154 provides a ligand contact to substrate. 2 residues coordinate Mg(2+): Asp177 and Asp181.

Belongs to the archaeal SPP-like hydrolase family. The cofactor is Mg(2+).

It catalyses the reaction 2-phosphoglycolate + H2O = glycolate + phosphate. Functionally, catalyzes the dephosphorylation of 2-phosphoglycolate. The protein is Phosphoglycolate phosphatase of Nitrosopumilus maritimus (strain SCM1).